The sequence spans 903 residues: Protein translocase subunit SecA (903 aa).

Residues glutamine 85, 103–107 (GEGKT), and aspartate 492 contribute to the ATP site. Residues 863–890 (GDGVKQPVRRDKKVGRNSPCPCGSGKKY) form a disordered region. Residues cysteine 882, cysteine 884, cysteine 893, and cysteine 894 each coordinate Zn(2+).

It belongs to the SecA family. Monomer and homodimer. Part of the essential Sec protein translocation apparatus which comprises SecA, SecYEG and auxiliary proteins SecDF. Other proteins may also be involved. The cofactor is Zn(2+).

The protein resides in the cell membrane. It is found in the cytoplasm. The catalysed reaction is ATP + H2O + cellular proteinSide 1 = ADP + phosphate + cellular proteinSide 2.. In terms of biological role, part of the Sec protein translocase complex. Interacts with the SecYEG preprotein conducting channel. Has a central role in coupling the hydrolysis of ATP to the transfer of proteins into and across the cell membrane, serving as an ATP-driven molecular motor driving the stepwise translocation of polypeptide chains across the membrane. In Desulforudis audaxviator (strain MP104C), this protein is Protein translocase subunit SecA.